The following is a 453-amino-acid chain: MAKFSNWRELKQLLFFSFPIIVSQIARTAMSFVDIVMSGHYATADLAAVTLGSSIWFPIFVLGYGTIIMLAADVAKQKAQHDDEGIKDSLKNYLFLAVILSIPIIILLMLVSWLLSFIGIDEHILEITQGYVIALACGVPSVMIFNVFRSFLQGLEDTKIAMYLSAGALLLNIPLNYILIYGKLGLPEMGGIGAGITTAIINNLIAVCLIIYFLLKKEYRRYRPDFSLPKYNSLIRTFYIGMPSGLALFVEMVFLDVIAITAAPLGAQVIAAHNIMLNITSIIYTITGGIAAAVTVRVGSYIGKRDKISLTGTIKISIALILSISAVIGVLIYYFAGSFISLYTNDNGVIIIALNIIFLLCLFQFFDSCQAALSGILRGFHDTRSVFYAPLFGYWLVGLPLGFILALTDWVTERMGIIGFWYGLVLGLFVNAILLFIILKVRQRGMISRLISY.

Helical transmembrane passes span 13–35 (LLFF…FVDI), 50–72 (TLGS…MLAA), 93–115 (YLFL…SWLL), 125–147 (LEIT…IFNV), 160–182 (IAMY…LIYG), 192–214 (IGAG…IYFL), 238–260 (FYIG…VIAI), 275–297 (IMLN…VTVR), 318–340 (IALI…GSFI), 350–372 (IIIA…CQAA), 385–407 (SVFY…ILAL), and 417–439 (IIGF…FIIL).

This sequence belongs to the multi antimicrobial extrusion (MATE) (TC 2.A.66.1) family.

Its subcellular location is the cell inner membrane. Its function is as follows. Multidrug efflux pump. The chain is Probable multidrug resistance protein NorM (norM) from Photorhabdus laumondii subsp. laumondii (strain DSM 15139 / CIP 105565 / TT01) (Photorhabdus luminescens subsp. laumondii).